The primary structure comprises 173 residues: Crossover junction endodeoxyribonuclease RuvC (173 aa).

Catalysis depends on residues aspartate 8, glutamate 67, and aspartate 139. Mg(2+) is bound by residues aspartate 8, glutamate 67, and aspartate 139.

Belongs to the RuvC family. As to quaternary structure, homodimer which binds Holliday junction (HJ) DNA. The HJ becomes 2-fold symmetrical on binding to RuvC with unstacked arms; it has a different conformation from HJ DNA in complex with RuvA. In the full resolvosome a probable DNA-RuvA(4)-RuvB(12)-RuvC(2) complex forms which resolves the HJ. It depends on Mg(2+) as a cofactor.

The protein localises to the cytoplasm. The catalysed reaction is Endonucleolytic cleavage at a junction such as a reciprocal single-stranded crossover between two homologous DNA duplexes (Holliday junction).. Its function is as follows. The RuvA-RuvB-RuvC complex processes Holliday junction (HJ) DNA during genetic recombination and DNA repair. Endonuclease that resolves HJ intermediates. Cleaves cruciform DNA by making single-stranded nicks across the HJ at symmetrical positions within the homologous arms, yielding a 5'-phosphate and a 3'-hydroxyl group; requires a central core of homology in the junction. The consensus cleavage sequence is 5'-(A/T)TT(C/G)-3'. Cleavage occurs on the 3'-side of the TT dinucleotide at the point of strand exchange. HJ branch migration catalyzed by RuvA-RuvB allows RuvC to scan DNA until it finds its consensus sequence, where it cleaves and resolves the cruciform DNA. In Shewanella sp. (strain MR-4), this protein is Crossover junction endodeoxyribonuclease RuvC.